The sequence spans 100 residues: Aspartyl/glutamyl-tRNA(Asn/Gln) amidotransferase subunit C (100 aa).

It belongs to the GatC family. Heterotrimer of A, B and C subunits.

It carries out the reaction L-glutamyl-tRNA(Gln) + L-glutamine + ATP + H2O = L-glutaminyl-tRNA(Gln) + L-glutamate + ADP + phosphate + H(+). It catalyses the reaction L-aspartyl-tRNA(Asn) + L-glutamine + ATP + H2O = L-asparaginyl-tRNA(Asn) + L-glutamate + ADP + phosphate + 2 H(+). Its function is as follows. Allows the formation of correctly charged Asn-tRNA(Asn) or Gln-tRNA(Gln) through the transamidation of misacylated Asp-tRNA(Asn) or Glu-tRNA(Gln) in organisms which lack either or both of asparaginyl-tRNA or glutaminyl-tRNA synthetases. The reaction takes place in the presence of glutamine and ATP through an activated phospho-Asp-tRNA(Asn) or phospho-Glu-tRNA(Gln). This is Aspartyl/glutamyl-tRNA(Asn/Gln) amidotransferase subunit C from Streptococcus pyogenes serotype M49 (strain NZ131).